Here is a 253-residue protein sequence, read N- to C-terminus: Small ribosomal subunit protein cS22 (253 aa).

The transit peptide at 1–56 (MATFLTNVVSIKPTIFSFQSESFTPLHTRVNVFSSKPFPSLAGTFSRSSRTRFIPY) directs the protein to the chloroplast. RRM domains follow at residues 76–154 (RRVY…ITEK) and 177–253 (YKVY…VNKA).

The protein belongs to the chloroplast-specific ribosomal protein cS22 family. As to quaternary structure, component of the chloroplast small ribosomal subunit (SSU). Mature 70S chloroplast ribosomes of higher plants consist of a small (30S) and a large (50S) subunit. The 30S small subunit contains 1 molecule of ribosomal RNA (16S rRNA) and 24 different proteins. The 50S large subunit contains 3 rRNA molecules (23S, 5S and 4.5S rRNA) and 33 different proteins. As to expression, expressed constitutively in roots, stems, flower buds, flowers and leaves.

The protein resides in the plastid. The protein localises to the chloroplast. In terms of biological role, component of the chloroplast ribosome (chloro-ribosome), a dedicated translation machinery responsible for the synthesis of chloroplast genome-encoded proteins, including proteins of the transcription and translation machinery and components of the photosynthetic apparatus. May have a role in the recruitment of stored chloroplast mRNAs for active protein synthesis. Bind single strand DNA (ssDNA) and RNA in vitro. Exhibits RNA chaperone activity. Negatively regulates resistance responses to abiotic stresses during seed germination (e.g. salt, dehydration, and low temperature) and seedling growth (e.g. salt). The sequence is that of Small ribosomal subunit protein cS22 from Arabidopsis thaliana (Mouse-ear cress).